The following is a 274-amino-acid chain: Karrikin insensitive 2 receptor IA (274 aa).

Residue S95 is the Nucleophile of the active site. Residues D217 and H246 contribute to the active site.

Belongs to the AB hydrolase superfamily. Interacts with MAX2A and MAX2B in the presence of (-)-germacrene D, thus forming an E3 SCF ubiquitin ligase complex (ASK-cullin-F-box) containing MAX2A or MAX2B and KAI2IA recognizing SMAX1A; this leads to the subsequent degradation of the transcriptional corepressor SMAX1A, thus triggering the activation of a downstream signaling cascade. In terms of tissue distribution, strongly expressed in stigma.

Its subcellular location is the nucleus. The protein resides in the cytoplasm. Hydrolysis activity toward yoshimulactone green (YLG), a fluorescent agonist to strigolactone receptor, is inhibited by (-)-germacrene D and GR24, a synthetic strigolactone analog. In terms of biological role, hydrolase involved in the olfaction of sesquiterpene volatile organic compounds (VOCs) during volatile plant communication in a MAX2 proteins-dependent manner. Acts as a karrikin-insensitive receptor that stereospecifically perceives and binds to (-)-germacrene D, particularly in stigmas, and triggers a signaling cascade influencing plant fitness, as the result of reproductive organ growth-promoting effect; this process involves an interaction with MAX2 proteins (e.g. MAX2A and MAX2B) and the subsequent degradation of SMAX1a, a transcriptional corepressor. This Petunia hybrida (Petunia) protein is Karrikin insensitive 2 receptor IA.